The sequence spans 203 residues: Peptidyl-tRNA hydrolase (203 aa).

Residue tyrosine 16 participates in tRNA binding. The active-site Proton acceptor is histidine 21. The tRNA site is built by tyrosine 68, asparagine 70, and asparagine 116.

The protein belongs to the PTH family. As to quaternary structure, monomer.

The protein localises to the cytoplasm. It catalyses the reaction an N-acyl-L-alpha-aminoacyl-tRNA + H2O = an N-acyl-L-amino acid + a tRNA + H(+). Its function is as follows. Hydrolyzes ribosome-free peptidyl-tRNAs (with 1 or more amino acids incorporated), which drop off the ribosome during protein synthesis, or as a result of ribosome stalling. Functionally, catalyzes the release of premature peptidyl moieties from peptidyl-tRNA molecules trapped in stalled 50S ribosomal subunits, and thus maintains levels of free tRNAs and 50S ribosomes. The polypeptide is Peptidyl-tRNA hydrolase (Nostoc sp. (strain PCC 7120 / SAG 25.82 / UTEX 2576)).